The primary structure comprises 442 residues: Serine hydroxymethyltransferase (442 aa).

Residues tyrosine 54, 100-102 (SGS), and histidine 236 each bind pyridoxal 5'-phosphate. Cysteine 125 and cysteine 364 are joined by a disulfide. Residue lysine 237 is modified to N6-(pyridoxal phosphate)lysine. Pyridoxal 5'-phosphate is bound at residue glycine 272.

Belongs to the SHMT family. As to quaternary structure, homodimer. Pyridoxal 5'-phosphate serves as cofactor.

It is found in the cytoplasm. The protein localises to the mitochondrion matrix. The protein resides in the plastid. Its subcellular location is the apicoplast. It localises to the nucleus. The catalysed reaction is (6R)-5,10-methylene-5,6,7,8-tetrahydrofolate + glycine + H2O = (6S)-5,6,7,8-tetrahydrofolate + L-serine. The protein operates within one-carbon metabolism; tetrahydrofolate interconversion. Redox regulation; active in reducing conditions, inactive in oxidizing conditions. The reduction of the cysteine pairs allows the access binding of the tetrahydrofolate substrate to its binding site. This mechanism appears to be unique to Plasmodium species. Functionally, catalyzes the interconversion of serine to glycine accompanied with the production of 5,10-methylenetetrahydrofolate, a source of one-carbon units used by thymidylate synthase to convert dUMP to dTMP for DNA synthesis. Binds to its own mRNA and to the mRNA of bifunctional dihydrofolate reductase-thymidylate synthase (DHFR-TS) in vitro; the physiological relevance of this interaction is not clear. The sequence is that of Serine hydroxymethyltransferase from Plasmodium falciparum (isolate 3D7).